The sequence spans 283 residues: Pseudokinase OPG198 (283 aa).

ATP contacts are provided by Met-1 and Lys-30. In terms of domain architecture, Protein kinase spans Met-1 to Asp-283.

Belongs to the protein kinase superfamily. Ser/Thr protein kinase family. Poxviruses subfamily. As to quaternary structure, interacts with B1/VPK1. Interacts with host VRK1. Interacts with host VRK2.

Its subcellular location is the host nucleus. Both catalytically active kinases B1/VPK1 and host VRK2 repress B12 inhibitory activity in a B1/VPK1 deletion mutant strain. In terms of biological role, pseudokinase that plays a role in viral DNA replication repression by activating the antiviral protein BANF1 and inhibiting the activity of host VRK1, a cellular modulator of BANF1. This chain is Pseudokinase OPG198 (OPG198), found in Vaccinia virus (strain Western Reserve) (VACV).